A 394-amino-acid chain; its full sequence is Chorismate synthase (394 aa).

Arg-62 contacts NADP(+). FMN contacts are provided by residues 144–146, Gly-307, 322–326, and Arg-349; these read RAS and KPTPT.

Belongs to the chorismate synthase family. In terms of assembly, homotetramer. It depends on FMNH2 as a cofactor.

It catalyses the reaction 5-O-(1-carboxyvinyl)-3-phosphoshikimate = chorismate + phosphate. It functions in the pathway metabolic intermediate biosynthesis; chorismate biosynthesis; chorismate from D-erythrose 4-phosphate and phosphoenolpyruvate: step 7/7. In terms of biological role, catalyzes the anti-1,4-elimination of the C-3 phosphate and the C-6 proR hydrogen from 5-enolpyruvylshikimate-3-phosphate (EPSP) to yield chorismate, which is the branch point compound that serves as the starting substrate for the three terminal pathways of aromatic amino acid biosynthesis. This reaction introduces a second double bond into the aromatic ring system. This chain is Chorismate synthase, found in Acetivibrio thermocellus (strain ATCC 27405 / DSM 1237 / JCM 9322 / NBRC 103400 / NCIMB 10682 / NRRL B-4536 / VPI 7372) (Clostridium thermocellum).